Consider the following 1024-residue polypeptide: Protein sumv-1 (1024 aa).

6 disordered regions span residues 447 to 486 (DASQFGGGKKKQRLPPRRSPSFGTSPNSYQFHQQSQKKMP), 501 to 564 (NFQG…RRGV), 577 to 617 (PSRH…RSQA), 645 to 664 (SQMAGQRPGMTPSAQQGSPQ), 710 to 739 (VRSGSSSSVAGPSRSSVASGSQHTALDTVQ), and 773 to 1024 (AGNS…EEEL). 3 stretches are compositionally biased toward polar residues: residues 467-486 (SFGTSPNSYQFHQQSQKKMP), 501-514 (NFQGWKNQSTSSAT), and 528-542 (RSQQPKMIPLEQTQD). Over residues 584 to 600 (SPLTPSTSTSSSQLLAP) the composition is skewed to low complexity. Residues 605–617 (QPGTSSQTFRSQA) are compositionally biased toward polar residues. Composition is skewed to low complexity over residues 710–730 (VRSGSSSSVAGPSRSSVASGS) and 784–809 (AGAPGAKESSKAAGGAQKGTSAASTS). Residues 810 to 832 (VPEPTKSSESSVDPQSDVSFSNP) are compositionally biased toward polar residues. Over residues 859–870 (TLASESTSSEAT) the composition is skewed to low complexity. Over residues 873–883 (HDTTSSSSAET) the composition is skewed to polar residues. A compositionally biased stretch (basic and acidic residues) spans 903-914 (PEKEKEKIDRPK). 3 stretches are compositionally biased toward low complexity: residues 916 to 943 (PKSSTKRTTPTPSGRTPRAAAIAANQAI), 952 to 962 (SASTSSSAAST), and 970 to 986 (LLAELSVAAAAEEQQQA). Over residues 987–998 (IGSTSKNGGSTK) the composition is skewed to polar residues.

Its subcellular location is the nucleus. The protein localises to the cytoplasm. It localises to the cell projection. The protein resides in the axon. Its function is as follows. Nuclear factor that influences the activity of genes involved in vulval development. This is Protein sumv-1 from Caenorhabditis elegans.